A 174-amino-acid chain; its full sequence is Micrococcal nuclease (174 aa).

An N-terminal signal peptide occupies residues 1–23; that stretch reads MKSALAALRAVAAAVVLIVSVPA. Residues Arg-52, Glu-60, and Arg-94 contribute to the active site.

Belongs to the thermonuclease family.

The enzyme catalyses Endonucleolytic cleavage to nucleoside 3'-phosphates and 3'-phosphooligonucleotide end-products.. The sequence is that of Micrococcal nuclease (nuc) from Shigella flexneri.